Reading from the N-terminus, the 347-residue chain is Core-capsid bridging protein (347 aa).

Residues 290-320 (GYRGTTFQRRATAPSRRRGPSRRRRRRKATL) form a disordered region. The segment covering 304 to 318 (SRRRGPSRRRRRRKA) has biased composition (basic residues).

The protein belongs to the adenoviridae core-capsid bridging protein family. In terms of assembly, monomer. Homodimer. Exists in equilibrium between monomers and dimers in solution. Interacts with the histone-like nucleoprotein; this interactions bridge the virus core to the capsid. Interacts with core protein X; this interactions bridge the virus core to the capsid. Interacts with the endosome lysis protein VI; this interactions bridge the virus core to the capsid. Interacts with the peripentonal hexons. Interacts with host NPM1; this interaction might play a role in virus assembly.

The protein localises to the virion. It localises to the host nucleus. Its subcellular location is the host nucleolus. In terms of biological role, associates loosely with the viral DNA to form an outer shell around the nucleoprotein-DNA complex and links it with the capsid by binding the endosome lysis protein. Dissociates from the viral genome during entry. Might be involved in nuclear capsid assembly of the viral particles through its association with NPM1/nucleophosmin. This is Core-capsid bridging protein from Homo sapiens (Human).